The primary structure comprises 175 residues: Austinoid biosynthesis cluster protein F (175 aa).

The protein belongs to the trt14 isomerase family. In terms of assembly, homodimer.

It functions in the pathway secondary metabolite biosynthesis; terpenoid biosynthesis. In terms of biological role, part of the gene cluster that mediates the biosynthesis of calidodehydroaustin, a fungal meroterpenoid. The first step of the pathway is the synthesis of 3,5-dimethylorsellinic acid by the polyketide synthase ausA. 3,5-dimethylorsellinic acid is then prenylated by the polyprenyl transferase ausN. Further epoxidation by the FAD-dependent monooxygenase ausM and cyclization by the probable terpene cyclase ausL lead to the formation of protoaustinoid A. Protoaustinoid A is then oxidized to spiro-lactone preaustinoid A3 by the combined action of the FAD-binding monooxygenases ausB and ausC, and the dioxygenase ausE. Acid-catalyzed keto-rearrangement and ring contraction of the tetraketide portion of preaustinoid A3 by ausJ lead to the formation of preaustinoid A4. The aldo-keto reductase ausK, with the help of ausH, is involved in the next step by transforming preaustinoid A4 into isoaustinone which is in turn hydroxylated by the P450 monooxygenase ausI to form austinolide. The cytochrome P450 monooxygenase ausG modifies austinolide to austinol. Austinol is further acetylated to austin by the O-acetyltransferase ausP, which spontaneously changes to dehydroaustin. The cytochrome P450 monooxygenase ausR then converts dehydroaustin is into 7-dehydrodehydroaustin. The hydroxylation catalyzed by ausR permits the O-acetyltransferase ausQ to add an additional acetyl group to the molecule, leading to the formation of acetoxydehydroaustin. The short chain dehydrogenase ausT catalyzes the reduction of the double bond present between carbon atoms 1 and 2 to convert 7-dehydrodehydroaustin into 1,2-dihydro-7-hydroxydehydroaustin. AusQ catalyzes not only an acetylation reaction but also the addition of the PKS ausV diketide product to 1,2-dihydro-7-hydroxydehydroaustin, forming precalidodehydroaustin. Finally, the iron/alpha-ketoglutarate-dependent dioxygenase converts precalidodehydroaustin into calidodehydroaustin. In Aspergillus calidoustus, this protein is Austinoid biosynthesis cluster protein F.